The primary structure comprises 417 residues: D-amino acid dehydrogenase (417 aa).

Residue 3-17 (IVVLGGGVVGVTSAW) participates in FAD binding.

This sequence belongs to the DadA oxidoreductase family. FAD is required as a cofactor.

The catalysed reaction is a D-alpha-amino acid + A + H2O = a 2-oxocarboxylate + AH2 + NH4(+). The protein operates within amino-acid degradation; D-alanine degradation; NH(3) and pyruvate from D-alanine: step 1/1. Functionally, oxidative deamination of D-amino acids. This is D-amino acid dehydrogenase from Aeromonas hydrophila subsp. hydrophila (strain ATCC 7966 / DSM 30187 / BCRC 13018 / CCUG 14551 / JCM 1027 / KCTC 2358 / NCIMB 9240 / NCTC 8049).